The chain runs to 298 residues: uncharacterized protein (298 aa).

The span at Met1 to Met17 shows a compositional bias: basic and acidic residues. The tract at residues Met1–Gln22 is disordered. The S1 motif domain occupies Asn167–Leu227.

This is an uncharacterized protein from Bacillus subtilis (strain 168).